We begin with the raw amino-acid sequence, 866 residues long: E3 ubiquitin-protein ligase RNF216 (866 aa).

Disordered stretches follow at residues 46-117 (LVTP…NPRS), 131-161 (YTES…SAAL), and 211-240 (EFPG…HPLG). The span at 55-76 (EEEDLDDDVILTEDDSEDDYGE) shows a compositional bias: acidic residues. Residues leucine 80, threonine 89, and lysine 100 each participate in a glycyl lysine isopeptide (Lys-Gly) (interchain with G-Cter in SUMO2) cross-link. Positions 137–156 (LETQNQSSEDSETELLSNLG) are enriched in polar residues. Residues lysine 351 and lysine 354 each participate in a glycyl lysine isopeptide (Lys-Gly) (interchain with G-Cter in SUMO2) cross-link. Phosphoserine is present on serine 419. Residues lysine 425, lysine 430, lysine 448, lysine 459, and lysine 485 each participate in a glycyl lysine isopeptide (Lys-Gly) (interchain with G-Cter in SUMO2) cross-link. A coiled-coil region spans residues 475-491 (VQQEQEFYEQKIKEMAE). The tract at residues 511-728 (QLIECRCCYG…SPGAPCQECS (218 aa)) is TRIAD supradomain. Zn(2+)-binding residues include cysteine 515, cysteine 518, cysteine 537, cysteine 540, cysteine 605, and cysteine 608. Residues 515-564 (CRCCYGEFPFEELTQCADAHLFCKECLIRYAQEAVFGSGKLELSCMEGSC) form an RING-type 1 zinc finger. The IBR-type zinc finger occupies 583–648 (YKYYERKAEE…LWKEHNGLTC (66 aa)). Lysine 619 participates in a covalent cross-link: Glycyl lysine isopeptide (Lys-Gly) (interchain with G-Cter in SUMO2). Zn(2+) contacts are provided by cysteine 623, cysteine 628, cysteine 633, cysteine 636, histidine 643, and cysteine 648. Glycyl lysine isopeptide (Lys-Gly) (interchain with G-Cter in SUMO2) cross-links involve residues lysine 658 and lysine 666. Cysteine 675 and cysteine 678 together coordinate Zn(2+). An RING-type 2; atypical zinc finger spans residues 675 to 703 (CHKCGTGLIKSEGCNRMSCRCGAQMCYLC). Cysteine 688 is a catalytic residue. 5 residues coordinate Zn(2+): cysteine 693, cysteine 695, cysteine 700, cysteine 703, and histidine 716. Serine 719 is subject to Phosphoserine; by MAPK1. Cysteine 724 is a binding site for Zn(2+). Positions 737-763 (TEDDEKLIEEIQKEAEEEQKRKNGENT) form a coiled coil. Residues lysine 765 and lysine 773 each participate in a glycyl lysine isopeptide (Lys-Gly) (interchain with G-Cter in SUMO2) cross-link.

Interacts with UBE2L3 and to some extent with UBE2L6. Interacts with TRAF3, TLR3, TLR4, TLR5 and TLR9. Isoform 3/ZIN binds RIPK1. As to quaternary structure, (Microbial infection) Isoform 3/ZIN binds RIPK1 and HIV Vif. Post-translationally, auto-ubiquitinated. In terms of processing, phosphorylation at Ser-719 enhances acceptor ubiquitin binding and chain-type specificity towards 'Lys-63' di-ubiquitin but not di-ubiquitin with other linkage types. In terms of tissue distribution, ubiquitous, with the highest levels of expression in testis and peripheral blood leukocytes.

Its subcellular location is the cytoplasm. It is found in the cytoplasmic vesicle. The protein resides in the clathrin-coated vesicle. It catalyses the reaction S-ubiquitinyl-[E2 ubiquitin-conjugating enzyme]-L-cysteine + [acceptor protein]-L-lysine = [E2 ubiquitin-conjugating enzyme]-L-cysteine + N(6)-ubiquitinyl-[acceptor protein]-L-lysine.. It functions in the pathway protein modification; protein ubiquitination. Allosterically activated by 'Lys-63'-linked di-ubiquitin. E3 ubiquitin ligase which accepts ubiquitin from specific E2 ubiquitin-conjugating enzymes, and then transfers it to substrates promoting their ubiquitination. Plays a role in the regulation of antiviral responses by promoting the degradation of TRAF3, TLR4 and TLR9. In turn, down-regulates NF-kappa-B and IRF3 activation as well as beta interferon production. Also participates in the regulation of autophagy by ubiquitinating BECN1 leading to its degradation and autophagy inhibition. Plays a role in ARC-dependent synaptic plasticity by mediating ARC ubiquitination resulting in its rapid proteasomal degradation. Plays aso an essential role in spermatogenesis and male fertility. Mechanistically, regulates meiosis by promoting the degradation of PRKACB through the ubiquitin-mediated lysosome pathway. Modulates the gonadotropin-releasing hormone signal pathway by affecting the stability of STAU2 that is required for the microtubule-dependent transport of neuronal RNA from the cell body to the dendrite. Its function is as follows. Inhibits TNF and IL-1 mediated activation of NF-kappa-B. Promotes TNF and RIP mediated apoptosis. In Homo sapiens (Human), this protein is E3 ubiquitin-protein ligase RNF216 (RNF216).